The sequence spans 446 residues: Actin-related protein 6 (446 aa).

Basic residues predominate over residues 1-11; the sequence is MTGRGGAKKSR. Positions 1 to 24 are disordered; sequence MTGRGGAKKSRAAGPAPPTTTLVL.

It belongs to the actin family. ARP6 subfamily. Component of the SWR1 chromatin remodeling complex.

It localises to the cytoplasm. The protein localises to the cytoskeleton. Its subcellular location is the nucleus. In terms of biological role, component of the SWR1 complex which mediates the ATP-dependent exchange of histone H2A for the H2A variant H2A.Z leading to transcriptional regulation of selected genes by chromatin remodeling. Involved in chromosome stability. In Neurospora crassa (strain ATCC 24698 / 74-OR23-1A / CBS 708.71 / DSM 1257 / FGSC 987), this protein is Actin-related protein 6 (arp-6).